Consider the following 146-residue polypeptide: Hemoglobin subunit beta-1/2 (146 aa).

Position 1 is an N-acetylvaline (Val1). A Globin domain is found at 2 to 146 (HLTGEEKSGL…VANALAHKYH (145 aa)). Thr12 is subject to Phosphothreonine. An N6-acetyllysine modification is found at Lys59. Heme b is bound at residue His63. An N6-acetyllysine modification is found at Lys82. His92 contacts heme b. Cys93 carries the S-nitrosocysteine modification. Lys144 is subject to N6-acetyllysine.

This sequence belongs to the globin family. As to quaternary structure, heterotetramer of two alpha chains and two beta chains. As to expression, red blood cells.

Involved in oxygen transport from the lung to the various peripheral tissues. The sequence is that of Hemoglobin subunit beta-1/2 (HBB) from Physeter macrocephalus (Sperm whale).